The primary structure comprises 181 residues: Trafficking protein particle complex subunit 3-like protein (181 aa).

C68 is lipidated: S-palmitoyl cysteine.

It belongs to the TRAPP small subunits family. BET3 subfamily. Homodimer. Component of the multisubunit TRAPP (transport protein particle) complex, which includes at least TRAPPC2, TRAPPC2L, TRAPPC3, TRAPPC3L, TRAPPC4, TRAPPC5, TRAPPC8, TRAPPC9, TRAPPC10, TRAPPC11 and TRAPPC12.

It is found in the golgi apparatus. Its subcellular location is the cis-Golgi network. It localises to the endoplasmic reticulum. May play a role in vesicular transport from endoplasmic reticulum to Golgi. This chain is Trafficking protein particle complex subunit 3-like protein (Trappc3l), found in Mus musculus (Mouse).